A 354-amino-acid chain; its full sequence is Protein sex-lethal (354 aa).

The segment at 1–21 is disordered; it reads MYGNNNPGSNNNNGGYPPYGY. RRM domains follow at residues 125–203 and 211–291; these read TNLI…YARP and TNLY…LAEE.

As to quaternary structure, part of a complex containing fl(2)d, Sxl and vir. Part of a complex composed of at least mei-P26, bam, bgcn and Sxl; this complex is involved in translational repression of nanos mRNA. interacts with mei-p26. Interacts with nito. Interacts with Unr; cooperates with Unr to prevent translation of msl-2 transcripts. Interacts with how; promoting nuclear retention of msl-2 transcripts. In terms of tissue distribution, expressed in somatic tissues, but not in the pole cells, which are the precursors of the germline. Expressed in the anterior of the germarium.

The protein localises to the nucleus. Its subcellular location is the cytoplasm. Sex determination switch protein, which controls sexual development and dosage compensation in females. Sxl protein is only active in females: it is inactive in males throughout development. Acts as a mRNA-binding protein, which specifically binds to a subset of pre-mRNAs and mRNAs and regulates their processing and/or translation. Binds nanos mRNA and is involved in bam-bgcn mediated repression of nanos mRNA translation. Promotes sexual development by controlling the female-specific alternative splicing of the transformer (tra) pre-mRNA: binds tightly to a characteristic uridine-rich polypyrimidine tract at the non-sex specific 3' splice site in one of the tra introns, preventing the general splicing factor U2AF from binding to this site and forcing it to bind to the female-specific 3' splice site. Acts as an inhibitor of dosage compensation in females by preventing production of msl-2 protein, an essential component of the MSL complex, the complex that mediates X-chromosome dosage compensation. Specifically binds to uridine stretches in both the 5'- and 3'-UTR of msl-2 transcripts. Sxl first acts at the splicing level by promoting retention of an intron in the 5' UTR of msl-2 pre-mRNA. The retained intron contains Sxl-binding sites that are required for subsequent steps of repression: after msl-2 mRNA export into the cytoplasm, Sxl coordinates its translational repression by targeting early steps of translation initiation. Together with how, Sxl also prevents production of msl-2 protein by preventing nuclear export of msl-2 transcripts. In terms of biological role, embryo-specific product, which is expressed early only in female embryos and specifies female-adult specific splicing. This Drosophila melanogaster (Fruit fly) protein is Protein sex-lethal.